The chain runs to 72 residues: Large ribosomal subunit protein bL32 (72 aa).

The protein belongs to the bacterial ribosomal protein bL32 family.

The chain is Large ribosomal subunit protein bL32 from Dehalococcoides mccartyi (strain ATCC BAA-2266 / KCTC 15142 / 195) (Dehalococcoides ethenogenes (strain 195)).